A 27-amino-acid polypeptide reads, in one-letter code: Pyruvate dehydrogenase protein X component, mitochondrial (27 aa).

The segment at 1–27 is disordered; the sequence is FRLSPAARNILEKHSLDASQGTATGPR. Residues 2–27 form the Peripheral subunit-binding (PSBD) domain; sequence RLSPAARNILEKHSLDASQGTATGPR. Lys-13 carries the N6-acetyllysine modification. Ser-15 carries the phosphoserine modification. The span at 17 to 27 shows a compositional bias: polar residues; it reads DASQGTATGPR.

Belongs to the 2-oxoacid dehydrogenase family. Part of the inner core of the multimeric pyruvate dehydrogenase complex that is composed of about 48 DLAT and 12 PDHX molecules. This core binds multiple copies of pyruvate dehydrogenase (subunits PDH1A and PDHB, E1), dihydrolipoamide acetyltransferase (DLAT, E2) and lipoamide dehydrogenase (DLD, E3). Interacts with SIRT4. Interacts with DLD.

The protein localises to the mitochondrion matrix. Functionally, required for anchoring dihydrolipoamide dehydrogenase (E3) to the dihydrolipoamide transacetylase (E2) core of the pyruvate dehydrogenase complexes of eukaryotes. This specific binding is essential for a functional PDH complex. The chain is Pyruvate dehydrogenase protein X component, mitochondrial from Mesocricetus auratus (Golden hamster).